A 557-amino-acid chain; its full sequence is ADP-ribosylation factor-binding protein GGA1 (557 aa).

Residues 29–165 form the VHS domain; sequence ACRSTLPEPD…LLKYKGYTFP (137 aa). Positions 192–317 constitute a GAT domain; that stretch reads ERAQAAKLEE…LLKRYKSIKG (126 aa). T348 is modified (phosphothreonine). Phosphoserine occurs at positions 353, 357, 378, and 394. The region spanning 440–556 is the GAE domain; sequence AQSQRHILNQ…EESGTTSLPT (117 aa).

Binds to ARF1 and ARF2.

It is found in the golgi apparatus. The protein localises to the trans-Golgi network. In terms of biological role, may play a role in the regulation of membrane traffic through the trans-Golgi network. In Saccharomyces cerevisiae (strain ATCC 204508 / S288c) (Baker's yeast), this protein is ADP-ribosylation factor-binding protein GGA1 (GGA1).